The sequence spans 447 residues: Argininosuccinate synthase (447 aa).

ATP is bound by residues 17–25 and A43; that span reads AFSGGLDTS. Y99 is a binding site for L-citrulline. 2 residues coordinate ATP: G129 and T131. Positions 131, 135, and 136 each coordinate L-aspartate. N135 contributes to the L-citrulline binding site. Position 136 (D136) interacts with ATP. L-citrulline-binding residues include R139 and S192. D194 is an ATP binding site. L-citrulline contacts are provided by T201, E203, and E280.

Belongs to the argininosuccinate synthase family. Type 2 subfamily. As to quaternary structure, homotetramer.

It is found in the cytoplasm. The catalysed reaction is L-citrulline + L-aspartate + ATP = 2-(N(omega)-L-arginino)succinate + AMP + diphosphate + H(+). The protein operates within amino-acid biosynthesis; L-arginine biosynthesis; L-arginine from L-ornithine and carbamoyl phosphate: step 2/3. The protein is Argininosuccinate synthase of Escherichia coli O1:K1 / APEC.